The primary structure comprises 659 residues: MDIKFEGNDAECTAGLKKASEGSFVLKDHVLIEFKINGKVAGKIKTPCEGVVTFGKGLKPGIVLNKGQVIATVSECTHAIVIKDMCATCGKDLREKGGRAGQRKEQSTANVSMIHHVPELIVSDTLAKEIGSADENNLITNRKLVLLVDLDQTIIHTSDKPMTVDTENHKDITKYNLHSRVYTTKLRPHTTEFLNKMSNMYEMHIVTYGQRQYAHRIAQILDPDARLFEQRILSRDELFSAQHKTNNLKALFPCGDNLVVIIDDRSDVWMYSEALIQIKPYRFFKEVGDINAPKNSKEQMPVQIEDDAHEDKVLEEIERVLTNIHDKYYEKHDLRGSEEVLLDVKEVIKEERHKVLDGCVIVFSGIVPMGEKLERTDIYRLCTQFGAVIVPDVTDDVTHVVGARYGTQKVYQANRLNKFVVTVQWVYACVEKWLKADENLFQLTKESTPPVGRPLGSKYVNDLANMDTIGKAALADMNNEVDEALSDDEDDGDNEDEDDDGNDVGEDKGDENLEEKQEKNEEEMDDVEQNGSVENQSGDALENETDSTSRGQKRKHCPEMEDEEEESDSDNEDDDTPMSYKALLSDSRKKGRIVPENEDDAVFDVDDEKGHAPANIDEEEDDEDNEDEEVPESDDDDEFEDMAALIERQISDAVDEKDQ.

In terms of domain architecture, FCP1 homology spans 139 to 303; that stretch reads ITNRKLVLLV…KNSKEQMPVQ (165 aa). Positions 351-443 constitute a BRCT domain; sequence ERHKVLDGCV…LKADENLFQL (93 aa). Positions 484 to 504 are enriched in acidic residues; sequence ALSDDEDDGDNEDEDDDGNDV. The segment at 484–640 is disordered; the sequence is ALSDDEDDGD…PESDDDDEFE (157 aa). Residues 505-519 are compositionally biased toward basic and acidic residues; sequence GEDKGDENLEEKQEK. Over residues 529-538 the composition is skewed to polar residues; it reads QNGSVENQSG. Acidic residues-rich tracts occupy residues 560–576, 596–607, and 616–640; these read MEDE…DDDT, ENEDDAVFDVDD, and IDEE…DEFE.

It is found in the nucleus. It catalyses the reaction O-phospho-L-seryl-[protein] + H2O = L-seryl-[protein] + phosphate. The enzyme catalyses O-phospho-L-threonyl-[protein] + H2O = L-threonyl-[protein] + phosphate. During the late stages of oogenesis, dephosphorylates 'Ser-5' of the heptad repeats YSPTSPS in the C-terminal domain of the largest RNA polymerase II subunit ama-1. Similarly, dephosphorylates 'Ser-5' of ama-1 in early embryonic cells prior to the activation of the zygotic transcription program at the 4-cell embryonic stage. May dephosphorylate 'Ser-2' of the ama-1 heptad repeats YSPTSPS in embryonic somatic and germline cells. This chain is RNA polymerase II subunit A C-terminal domain phosphatase, found in Caenorhabditis elegans.